A 375-amino-acid chain; its full sequence is Queuine tRNA-ribosyltransferase (375 aa).

Catalysis depends on D94, which acts as the Proton acceptor. Substrate is bound by residues 94 to 98 (DSGGF), D148, Q191, and G218. The interval 249–255 (GVGTPED) is RNA binding. Residue D268 is the Nucleophile of the active site. The interval 273-277 (TRIAR) is RNA binding; important for wobble base 34 recognition. The Zn(2+) site is built by C306, C308, C311, and H337.

Belongs to the queuine tRNA-ribosyltransferase family. In terms of assembly, homodimer. Within each dimer, one monomer is responsible for RNA recognition and catalysis, while the other monomer binds to the replacement base PreQ1. Zn(2+) is required as a cofactor.

It carries out the reaction 7-aminomethyl-7-carbaguanine + guanosine(34) in tRNA = 7-aminomethyl-7-carbaguanosine(34) in tRNA + guanine. It functions in the pathway tRNA modification; tRNA-queuosine biosynthesis. In terms of biological role, catalyzes the base-exchange of a guanine (G) residue with the queuine precursor 7-aminomethyl-7-deazaguanine (PreQ1) at position 34 (anticodon wobble position) in tRNAs with GU(N) anticodons (tRNA-Asp, -Asn, -His and -Tyr). Catalysis occurs through a double-displacement mechanism. The nucleophile active site attacks the C1' of nucleotide 34 to detach the guanine base from the RNA, forming a covalent enzyme-RNA intermediate. The proton acceptor active site deprotonates the incoming PreQ1, allowing a nucleophilic attack on the C1' of the ribose to form the product. After dissociation, two additional enzymatic reactions on the tRNA convert PreQ1 to queuine (Q), resulting in the hypermodified nucleoside queuosine (7-(((4,5-cis-dihydroxy-2-cyclopenten-1-yl)amino)methyl)-7-deazaguanosine). This chain is Queuine tRNA-ribosyltransferase, found in Caldanaerobacter subterraneus subsp. tengcongensis (strain DSM 15242 / JCM 11007 / NBRC 100824 / MB4) (Thermoanaerobacter tengcongensis).